A 177-amino-acid polypeptide reads, in one-letter code: MKKYTMNEMVDITKDMLNKRGVMIEDIARIVQKLQEKYNPNLPLSVCMENVEKVLNKREIIHAVLTGLALDQLAEQKLLPEPLQHLVETDEPLYGIDEIIPLSIVNVYGSIGLTNFGYLDKEKIGIIKELDESPDGIHTFLDDIVAALAAAAASRIAHTHQDLQDEEKEQDEKPVVS.

To B.subtilis YutG.

This is an uncharacterized protein from Bacillus subtilis (strain 168).